The sequence spans 363 residues: tRNA(Met) cytidine acetate ligase (363 aa).

ATP-binding positions include 7–20 (IAEF…HKYL), Gly-96, Asn-152, and Arg-175.

This sequence belongs to the TmcAL family.

The protein localises to the cytoplasm. It catalyses the reaction cytidine(34) in elongator tRNA(Met) + acetate + ATP = N(4)-acetylcytidine(34) in elongator tRNA(Met) + AMP + diphosphate. In terms of biological role, catalyzes the formation of N(4)-acetylcytidine (ac(4)C) at the wobble position of elongator tRNA(Met), using acetate and ATP as substrates. First activates an acetate ion to form acetyladenylate (Ac-AMP) and then transfers the acetyl group to tRNA to form ac(4)C34. The polypeptide is tRNA(Met) cytidine acetate ligase (Streptococcus thermophilus (strain CNRZ 1066)).